Reading from the N-terminus, the 503-residue chain is Efflux pump vrtL (503 aa).

The segment at 1–59 is disordered; it reads MSKLSDNHSSASEGEKEAGDLESGPTAISSEPSFDDADRDPNLITWDGPKDPENPKNWP. N-linked (GlcNAc...) asparagine glycosylation is present at N7. Helical transmembrane passes span 68–88, 101–121, 133–153, 162–182, 194–214, 221–241, 295–315, 329–349, 377–397, 401–421, 432–454, and 471–491; these read WTVS…APAM, IEIY…PIFF, LLQI…FATT, FLAG…ISDM, VYTL…GFIA, WVFW…FFWL, IVFC…LMFA, PGIG…GLFF, SLAV…WSIG, WIMP…CLQG, TYAA…GFPL, and LLAF…WHFG.

Belongs to the major facilitator superfamily.

Its subcellular location is the membrane. Functionally, efflux pump; part of the gene cluster that mediates the biosynthesis of viridicatumtoxin, a tetracycline-like fungal meroterpenoid with a unique, fused spirobicyclic ring system. The polypeptide is Efflux pump vrtL (Penicillium aethiopicum).